The chain runs to 303 residues: Peroxisomal trans-2-enoyl-CoA reductase (303 aa).

23-47 (VTGGATGIGKAIVKELLELGSNVVI) is a binding site for NADP(+). At K32 the chain carries N6-succinyllysine. The residue at position 49 (S49) is a Phosphoserine. The active-site Proton acceptor is Y179. A Phosphotyrosine modification is found at Y179. The short motif at 301–303 (AKL) is the Microbody targeting signal element.

It belongs to the short-chain dehydrogenases/reductases (SDR) family. As to quaternary structure, interacts with PEX5, probably required to target it into peroxisomes.

Its subcellular location is the peroxisome. It catalyses the reaction a (2E)-enoyl-CoA + NADPH + H(+) = a 2,3-saturated acyl-CoA + NADP(+). It carries out the reaction (2E)-hexenoyl-CoA + NADPH + H(+) = hexanoyl-CoA + NADP(+). The catalysed reaction is (2E)-octenoyl-CoA + NADPH + H(+) = octanoyl-CoA + NADP(+). The enzyme catalyses (2E)-decenoyl-CoA + NADPH + H(+) = decanoyl-CoA + NADP(+). It catalyses the reaction (2E)-dodecenoyl-CoA + NADPH + H(+) = dodecanoyl-CoA + NADP(+). It carries out the reaction (2E)-tetradecenoyl-CoA + NADPH + H(+) = tetradecanoyl-CoA + NADP(+). It functions in the pathway lipid metabolism; fatty acid biosynthesis. Participates in chain elongation of fatty acids. Catalyzes the reduction of trans-2-enoyl-CoAs of varying chain lengths from 6:1 to 16:1, having maximum activity with 10:1 CoA. Has no 2,4-dienoyl-CoA reductase activity. The sequence is that of Peroxisomal trans-2-enoyl-CoA reductase (PECR) from Pongo abelii (Sumatran orangutan).